The sequence spans 1307 residues: CRISPR-associated endonuclease Cas12a (1307 aa).

A WED-I (OBD-I) region spans residues 1 to 35 (MTQFEGFTNLYQVSKTLRFELIPQGKTLKHIQEQG). The tract at residues 36-320 (FIEEDKARND…SDRNTLSFIL (285 aa)) is REC1 (helical-I). 47–51 (YKELK) is a crRNA binding site. Positions 74-106 (ENLSAAIDSYRKEKTEETRNALIEEQATYRNAI) form a coiled coil. Residues 175-176 (NR) and 307-310 (KQIL) each bind crRNA. The tract at residues 321–526 (EEFKSDEEVI…ARNYATKKPY (206 aa)) is WED-II (helical-II). Residues 527–598 (SVEKFKLNFQ…GFDKMYYDYF (72 aa)) form a WED-II (OBD-I) region. The PAM-binding on target DNA DNA-binding region spans 599-607 (PDAAKMIPK). The interval 599 to 718 (PDAAKMIPKC…EYYAELNPLL (120 aa)) is PI (LHD). The interval 719–884 (YHISFQRIAE…ITLNYQAANS (166 aa)) is WED-III (OBD-III). A crRNA-binding site is contributed by 752-761 (KGHHGKPNLH). The segment at residues 780-783 (KLNG) is a DNA-binding region (target DNA). Residue H800 is the For pre-crRNA processing of the active site. 806–808 (MLN) lines the crRNA pocket. Residues K809 and K860 each act as for pre-crRNA processing in the active site. The ruvC-I stretch occupies residues 885 to 940 (PSKFNQRVNAYLKEHPETPIIGIDRGERNLIYITVIDSTGKILEQRSLNTIQQFDY). D908 acts as the For DNase activity of RuvC domain in catalysis. The segment at 941-957 (QKKLDNREKERVAARQA) is bridge helix. The segment at residues 951 to 968 (RVAARQAWSVVGTIKDLK) is a DNA-binding region (target DNA). Positions 958–1066 (WSVVGTIKDL…TQSGFLFYVP (109 aa)) are ruvC-II. E993 (for DNase activity of RuvC domain) is an active-site residue. Positions 1051 to 1053 (SFA) form a DNA-binding region, target DNA. The segment at 1067 to 1262 (APYTSKIDPL…FQNPEWPMDA (196 aa)) is nuclease domain. R1226 serves as the catalytic For DNase activity of nuclease domain. Catalysis depends on D1263, which acts as the For DNase activity of RuvC domain. Residues 1263–1307 (DANGAYHIALKGQLLLNHLKESKDLKLQNGISNQDWLAYIQELRN) form a ruvC-III region.

The protein belongs to the CRISPR-associated endonuclease Cas12a family. Monomer. Mg(2+) serves as cofactor.

It catalyses the reaction Endonucleolytic cleavage to 5'-phosphodinucleotide and 5'-phosphooligonucleotide end-products.. The catalysed reaction is RNA = a 5'-hydroxy-ribonucleotide + n nucleoside-2',3'-cyclophosphates.. Functionally, CRISPR (clustered regularly interspaced short palindromic repeat), is an adaptive immune system that provides protection against mobile genetic elements (viruses, transposable elements and conjugative plasmids). CRISPR clusters contain sequences complementary to antecedent mobile elements and target invading nucleic acids. CRISPR clusters are transcribed and processed into CRISPR RNA (crRNA). Recognizes a short motif in the CRISPR repeat sequences (the 5' PAM or protospacer adjacent motif, TTTN in this organism) to help distinguish self versus nonself, as targets within the bacterial CRISPR locus do not have PAMs. Has dsDNA endonuclease activity, results in staggered 4-base 5' overhangs 19 and 22 bases downstream of the PAM on the non-targeted and targeted strand respectively. Non-target strand cleavage by the RuvC domain is probably a prerequisite of target strand cleavage by the Nuc domain. Protects E.coli against plasmids and bacteriophage M13mp18, phage T4 with hydroxymethyl or unmodified (but not glycosylated) cytosines and to a lesser extent against lambda and VpaE1 phage. In this CRISPR system correct processing of pre-crRNA requires only this protein and the CRISPR locus. This chain is CRISPR-associated endonuclease Cas12a, found in Acidaminococcus sp. (strain BV3L6).